Consider the following 214-residue polypeptide: Adenylate kinase (214 aa).

10–15 (GAGKGT) contacts ATP. Positions 30–59 (STGDMFRAALKNQTPLGLKAKEYMDKGELV) are NMP. Residues Thr31, Arg36, 57–59 (ELV), 85–88 (GFPR), and Gln92 contribute to the AMP site. The interval 126 to 163 (GRRVCRQCGATYHVKFNPPKVEGVCDACGGELYQRSDD) is LID. Arg127 is a binding site for ATP. Cys130 and Cys133 together coordinate Zn(2+). 136-137 (TY) is a binding site for ATP. Residues Cys150 and Cys153 each contribute to the Zn(2+) site. Residues Arg160 and Arg171 each coordinate AMP. Lys199 is an ATP binding site.

This sequence belongs to the adenylate kinase family. In terms of assembly, monomer.

Its subcellular location is the cytoplasm. It catalyses the reaction AMP + ATP = 2 ADP. It participates in purine metabolism; AMP biosynthesis via salvage pathway; AMP from ADP: step 1/1. In terms of biological role, catalyzes the reversible transfer of the terminal phosphate group between ATP and AMP. Plays an important role in cellular energy homeostasis and in adenine nucleotide metabolism. The protein is Adenylate kinase of Carboxydothermus hydrogenoformans (strain ATCC BAA-161 / DSM 6008 / Z-2901).